Reading from the N-terminus, the 86-residue chain is Cell division topological specificity factor (86 aa).

Belongs to the MinE family.

Prevents the cell division inhibition by proteins MinC and MinD at internal division sites while permitting inhibition at polar sites. This ensures cell division at the proper site by restricting the formation of a division septum at the midpoint of the long axis of the cell. The chain is Cell division topological specificity factor from Shewanella sediminis (strain HAW-EB3).